The sequence spans 211 residues: Uracil phosphoribosyltransferase (211 aa).

Residues R78, R103, and 130–138 each bind 5-phospho-alpha-D-ribose 1-diphosphate; that span reads DPMLATGNS. Residues I193 and 198 to 200 each bind uracil; that span reads GDA. D199 contributes to the 5-phospho-alpha-D-ribose 1-diphosphate binding site.

It belongs to the UPRTase family. Requires Mg(2+) as cofactor.

The catalysed reaction is UMP + diphosphate = 5-phospho-alpha-D-ribose 1-diphosphate + uracil. Its pathway is pyrimidine metabolism; UMP biosynthesis via salvage pathway; UMP from uracil: step 1/1. Its activity is regulated as follows. Allosterically activated by GTP. Its function is as follows. Catalyzes the conversion of uracil and 5-phospho-alpha-D-ribose 1-diphosphate (PRPP) to UMP and diphosphate. This chain is Uracil phosphoribosyltransferase, found in Acinetobacter baumannii (strain AB307-0294).